The chain runs to 1029 residues: Protein SUPPRESSOR OF PHYA-105 1 (1029 aa).

The interval 42-69 (SETANSDCPGSSAHRNVDLTKPPPPEEA) is disordered. A Protein kinase domain is found at 188 to 529 (VQMKTPVSSS…ARDILKSELI (342 aa)). ATP contacts are provided by residues 194–202 (VSSSNFSQL) and lysine 216. The segment at 213-269 (VVGKNQETPPEFVSDQDLGSKEKKLDISKSPTPHDVLPLKSSPKGNGMVSHGDGNHS) is disordered. The span at 230–239 (LGSKEKKLDI) shows a compositional bias: basic and acidic residues. Residue aspartate 316 is the Proton acceptor of the active site. The disordered stretch occupies residues 347-392 (EDLNRRRPVVEESSSGGRDSKKRKMDLHLNSPGNQLQATSTGRPFK). Residues 377 to 388 (SPGNQLQATSTG) are compositionally biased toward polar residues. Positions 557-589 (VQKKKKASKLLQDIQTLEDDIKEAERRYSSNVS) form a coiled coil. The tract at residues 653–679 (ARSDKTLKDRDRCSENQNENQDMSTKG) is disordered. The segment covering 654 to 666 (RSDKTLKDRDRCS) has biased composition (basic and acidic residues). Residues 667-679 (ENQNENQDMSTKG) are compositionally biased toward polar residues. WD repeat units follow at residues 714-753 (NSAS…NESV), 763-803 (VNKS…GFSQ), 806-846 (EHQK…SLGT), 848-888 (WSPA…TPWC), 892-930 (GHEK…SSGL), 932-971 (PGAC…YSYY), and 997-1029 (DNGQ…LKLV). A DWD box motif is present at residues 866–881 (LAFGSADYKVYCYDLR).

Interacts with CO, COP1, HFR1, HY5 and PHYA. Light induces dissociation of the SPA1/COP1 complex. Binds to CRY1 in response to blue light, this interaction prevents SPA1/COP1 complex formation but stimulate CRY2/COP1 complex, and thus avoid COP1-dependent degradation of the transcription factor HY5 by the proteasome and promotes hypocotyl elongation.

Its subcellular location is the nucleus speckle. It is found in the nucleus. The protein localises to the PML body. Its function is as follows. Controls normal photoperiodic flowering and regulates circadian rhythms. Required for suppression of photomorphogenesis in dark-grown seedlings and for normal elongation growth of adult plants. Integral component of the COP1/SPA E3 ubiquitin-protein ligase complex. Involved in HY5, HFR1, LAF1 and CO degradation. This chain is Protein SUPPRESSOR OF PHYA-105 1 (SPA1), found in Arabidopsis thaliana (Mouse-ear cress).